The sequence spans 120 residues: Immunoglobulin kappa variable 2D-28 (120 aa).

The N-terminal stretch at 1–19 (MRLPAQLLGLLMLWVSGSS) is a signal peptide. Residues 20–120 (GDIVMTQSPL…YYCMQALQTP (101 aa)) enclose the Ig-like domain. The segment at 21 to 43 (DIVMTQSPLSLPVTPGEPASISC) is framework-1. An intrachain disulfide couples cysteine 43 to cysteine 113. Residues 44-59 (RSSQSLLHSNGYNYLD) form a complementarity-determining-1 region. The segment at 60–74 (WYLQKPGQSPQLLIY) is framework-2. The segment at 75 to 81 (LGSNRAS) is complementarity-determining-2. The interval 82–113 (GVPDRFSGSGSGTDFTLKISRVEAEDVGVYYC) is framework-3. A complementarity-determining-3 region spans residues 114-120 (MQALQTP).

Immunoglobulins are composed of two identical heavy chains and two identical light chains; disulfide-linked.

It localises to the secreted. The protein localises to the cell membrane. Its function is as follows. V region of the variable domain of immunoglobulin light chains that participates in the antigen recognition. Immunoglobulins, also known as antibodies, are membrane-bound or secreted glycoproteins produced by B lymphocytes. In the recognition phase of humoral immunity, the membrane-bound immunoglobulins serve as receptors which, upon binding of a specific antigen, trigger the clonal expansion and differentiation of B lymphocytes into immunoglobulins-secreting plasma cells. Secreted immunoglobulins mediate the effector phase of humoral immunity, which results in the elimination of bound antigens. The antigen binding site is formed by the variable domain of one heavy chain, together with that of its associated light chain. Thus, each immunoglobulin has two antigen binding sites with remarkable affinity for a particular antigen. The variable domains are assembled by a process called V-(D)-J rearrangement and can then be subjected to somatic hypermutations which, after exposure to antigen and selection, allow affinity maturation for a particular antigen. The protein is Immunoglobulin kappa variable 2D-28 of Homo sapiens (Human).